The sequence spans 352 residues: MASRKEGTGSTATSSSSTGGAVGKGKGKGGSGDSAVKQVQIDGLVVLKIIKHYQEEGQGTEVVQGVLLGLVVEDRLEITNCFPFPQHTEDDADFDEVQYQMEMMRSLRHVNIDHLHVGWYQSTYYGSFVTRALLDSQFSYQHAIEESVVLIYDPIKTAQGSLSLKAYRLTPKLMEVCKEKDFSPEALKKANITFEHMFEEVPIVIKNSHLINVLMWELEKKSAVADKHELLSLASSNHLGKNLQLLMDRVDEMSQDIIKYNTYMRNSSKQQQQKHQYQQRRQQENMQRQSRGEPPLPEEDLSKLFKPHQAPARMDSLLIAGQINTYCQNIKEFTAQNLGKLFMAQALQEYSN.

The interval 1 to 34 (MASRKEGTGSTATSSSSTGGAVGKGKGKGGSGDS) is disordered. Ser-3 carries the phosphoserine modification. The segment covering 8-19 (TGSTATSSSSTG) has biased composition (low complexity). Residues 20 to 32 (GAVGKGKGKGGSG) are compositionally biased toward gly residues. The MPN domain occupies 39-173 (VQIDGLVVLK…LKAYRLTPKL (135 aa)). Residue Ser-183 is modified to Phosphoserine. The tract at residues 265-300 (RNSSKQQQQKHQYQQRRQQENMQRQSRGEPPLPEED) is disordered. The span at 270 to 289 (QQQQKHQYQQRRQQENMQRQ) shows a compositional bias: low complexity. Lys-303 participates in a covalent cross-link: Glycyl lysine isopeptide (Lys-Gly) (interchain with G-Cter in SUMO2).

Belongs to the eIF-3 subunit H family. As to quaternary structure, component of the eukaryotic translation initiation factor 3 (eIF-3) complex, which is composed of 13 subunits: EIF3A, EIF3B, EIF3C, EIF3D, EIF3E, EIF3F, EIF3G, EIF3H, EIF3I, EIF3J, EIF3K, EIF3L and EIF3M. The eIF-3 complex appears to include 3 stable modules: module A is composed of EIF3A, EIF3B, EIF3G and EIF3I; module B is composed of EIF3F, EIF3H, and EIF3M; and module C is composed of EIF3C, EIF3D, EIF3E, EIF3K and EIF3L. EIF3C of module C binds EIF3B of module A and EIF3H of module B, thereby linking the three modules. EIF3J is a labile subunit that binds to the eIF-3 complex via EIF3B. The eIF-3 complex interacts with RPS6KB1 under conditions of nutrient depletion. Mitogenic stimulation leads to binding and activation of a complex composed of MTOR and RPTOR, leading to phosphorylation and release of RPS6KB1 and binding of EIF4B to eIF-3. Interacts with RNF139; the interaction leads to protein translation inhibitions in a ubiquitination-dependent manner. Interacts with DHX33; the interaction is independent of RNA.

It is found in the cytoplasm. Component of the eukaryotic translation initiation factor 3 (eIF-3) complex, which is required for several steps in the initiation of protein synthesis. The eIF-3 complex associates with the 40S ribosome and facilitates the recruitment of eIF-1, eIF-1A, eIF-2:GTP:methionyl-tRNAi and eIF-5 to form the 43S pre-initiation complex (43S PIC). The eIF-3 complex stimulates mRNA recruitment to the 43S PIC and scanning of the mRNA for AUG recognition. The eIF-3 complex is also required for disassembly and recycling of post-termination ribosomal complexes and subsequently prevents premature joining of the 40S and 60S ribosomal subunits prior to initiation. The eIF-3 complex specifically targets and initiates translation of a subset of mRNAs involved in cell proliferation, including cell cycling, differentiation and apoptosis, and uses different modes of RNA stem-loop binding to exert either translational activation or repression. This is Eukaryotic translation initiation factor 3 subunit H (Eif3h) from Rattus norvegicus (Rat).